The chain runs to 394 residues: Queuine tRNA-ribosyltransferase (394 aa).

The Proton acceptor role is filled by aspartate 99. Substrate-binding positions include 99–103 (DSGGF), aspartate 153, glutamine 195, and glycine 222. Residues 253–259 (GVGHPED) are RNA binding. Catalysis depends on aspartate 272, which acts as the Nucleophile. The tract at residues 277 to 281 (TRTGR) is RNA binding; important for wobble base 34 recognition. Cysteine 310, cysteine 312, cysteine 315, and histidine 341 together coordinate Zn(2+).

This sequence belongs to the queuine tRNA-ribosyltransferase family. As to quaternary structure, homodimer. Within each dimer, one monomer is responsible for RNA recognition and catalysis, while the other monomer binds to the replacement base PreQ1. The cofactor is Zn(2+).

It carries out the reaction 7-aminomethyl-7-carbaguanine + guanosine(34) in tRNA = 7-aminomethyl-7-carbaguanosine(34) in tRNA + guanine. It functions in the pathway tRNA modification; tRNA-queuosine biosynthesis. Catalyzes the base-exchange of a guanine (G) residue with the queuine precursor 7-aminomethyl-7-deazaguanine (PreQ1) at position 34 (anticodon wobble position) in tRNAs with GU(N) anticodons (tRNA-Asp, -Asn, -His and -Tyr). Catalysis occurs through a double-displacement mechanism. The nucleophile active site attacks the C1' of nucleotide 34 to detach the guanine base from the RNA, forming a covalent enzyme-RNA intermediate. The proton acceptor active site deprotonates the incoming PreQ1, allowing a nucleophilic attack on the C1' of the ribose to form the product. After dissociation, two additional enzymatic reactions on the tRNA convert PreQ1 to queuine (Q), resulting in the hypermodified nucleoside queuosine (7-(((4,5-cis-dihydroxy-2-cyclopenten-1-yl)amino)methyl)-7-deazaguanosine). This Deinococcus radiodurans (strain ATCC 13939 / DSM 20539 / JCM 16871 / CCUG 27074 / LMG 4051 / NBRC 15346 / NCIMB 9279 / VKM B-1422 / R1) protein is Queuine tRNA-ribosyltransferase.